A 290-amino-acid chain; its full sequence is Concanavalin-A (290 aa).

Positions 1-29 (MAISKKSSLFLPIFTFITMFLMVVNKVSS) are cleaved as a signal peptide. 2 residues coordinate a carbohydrate: aspartate 119 and arginine 139. Residue aspartate 119 participates in Ca(2+) binding. Positions 149 to 163 (VIRNSTTIDFNAAYN) are excised as a propeptide. A glycan (N-linked (GlcNAc...) asparagine) is linked at asparagine 152. Mn(2+) is bound by residues glutamate 171 and aspartate 173. Aspartate 173, tyrosine 175, asparagine 177, and aspartate 182 together coordinate Ca(2+). Mn(2+) is bound by residues aspartate 182 and histidine 187. 262–263 (LY) provides a ligand contact to a carbohydrate. Positions 282-290 (EIPDIATVV) are excised as a propeptide.

It belongs to the leguminous lectin family. As to quaternary structure, homotetramer. In terms of processing, the mature chain consists of residues 164-281 followed by 30-148. To form a mature chain the precursor undergoes further post-translational modification after removal of the signal sequence; cleavage after Asn at positions Asn-148, Asn-163, and Asn-281 is followed by transposition and ligation (By formation of a new peptide bond) of residues 164-281 and 30-148.

Glucose/D-mannose/rhamnose specific lectin. Has hemagglutinating activity towards rabbit erythrocytes. Has mitogenic activity towards murine splenocytes that is inhibited by glucose. Inhibits HIV-1 reverse transcriptase with an IC(50) of 35 uM. Has a potent antiproliferative activity against L1210 leukemia cells in vitro that is not inhibited by glucose. Inhibits translation in cell-free rabbit reticulocyte system with an IC(50) of 2.08 uM. Lacks anti-fungal activity against M.arachidicola, B.cenera and F.oxysporum. The polypeptide is Concanavalin-A (Canavalia gladiata (Sword bean)).